The sequence spans 175 residues: Ribosome maturation factor RimM (175 aa).

The region spanning glutamate 96–phenylalanine 175 is the PRC barrel domain.

This sequence belongs to the RimM family. Binds ribosomal protein uS19.

It is found in the cytoplasm. Functionally, an accessory protein needed during the final step in the assembly of 30S ribosomal subunit, possibly for assembly of the head region. Essential for efficient processing of 16S rRNA. May be needed both before and after RbfA during the maturation of 16S rRNA. It has affinity for free ribosomal 30S subunits but not for 70S ribosomes. The protein is Ribosome maturation factor RimM of Histophilus somni (strain 129Pt) (Haemophilus somnus).